The chain runs to 349 residues: Protein RecA (349 aa).

An ATP-binding site is contributed by 65–72 (GPESSGKT). The segment at 329-349 (KASDQTAAHDETEEEPDLLES) is disordered. Positions 339–349 (ETEEEPDLLES) are enriched in acidic residues.

The protein belongs to the RecA family.

Its subcellular location is the cytoplasm. Its function is as follows. Can catalyze the hydrolysis of ATP in the presence of single-stranded DNA, the ATP-dependent uptake of single-stranded DNA by duplex DNA, and the ATP-dependent hybridization of homologous single-stranded DNAs. It interacts with LexA causing its activation and leading to its autocatalytic cleavage. This Acinetobacter baylyi (strain ATCC 33305 / BD413 / ADP1) protein is Protein RecA.